Reading from the N-terminus, the 294-residue chain is UDP-3-O-acyl-N-acetylglucosamine deacetylase (294 aa).

Histidine 75, histidine 232, and aspartate 236 together coordinate Zn(2+). The Proton donor role is filled by histidine 259.

Belongs to the LpxC family. It depends on Zn(2+) as a cofactor.

The catalysed reaction is a UDP-3-O-[(3R)-3-hydroxyacyl]-N-acetyl-alpha-D-glucosamine + H2O = a UDP-3-O-[(3R)-3-hydroxyacyl]-alpha-D-glucosamine + acetate. Its pathway is glycolipid biosynthesis; lipid IV(A) biosynthesis; lipid IV(A) from (3R)-3-hydroxytetradecanoyl-[acyl-carrier-protein] and UDP-N-acetyl-alpha-D-glucosamine: step 2/6. Its function is as follows. Catalyzes the hydrolysis of UDP-3-O-myristoyl-N-acetylglucosamine to form UDP-3-O-myristoylglucosamine and acetate, the committed step in lipid A biosynthesis. The sequence is that of UDP-3-O-acyl-N-acetylglucosamine deacetylase from Campylobacter lari (strain RM2100 / D67 / ATCC BAA-1060).